The primary structure comprises 305 residues: MTLRTLQAGVAVSIALDRVCFFCYNGAVAHCVVEAAEDILDRRFSVLDKGFVRLIDYLGGDARIVQAARVSYGAGTRTARDDAALIDFLLRNKHTSPFEQVVLTFHVRAPIFVARQWMRHRTARISEVSSRYSLLSHDCYVPQETSVAVQSTRNKQGRASEGISPEQQQEVRAAFEAQQKAACAAYDALIQKNIARELARINVPLSLYTEWYWQIDLHNLFHFLRLRASAHAQAEIRAYAEVIIEITRAVAPCATASFENHEKDGVQFSGREFAALKALLAGEGLSLEGKERARFEEKLRSGLQQ.

A ThyX domain is found at 50 to 261; sequence GFVRLIDYLG…PCATASFENH (212 aa). FAD contacts are provided by residues serine 96, 119–121, and glutamate 127; that span reads RHR. Residues 116-119, 127-131, and arginine 200 each bind dUMP; these read QWMR and EVSSR. The ThyX motif motif lies at 119-129; sequence RHRTARISEVS. FAD-binding positions include 216 to 218 and histidine 222; that span reads DLH. Residue arginine 227 coordinates dUMP. Arginine 227 (involved in ionization of N3 of dUMP, leading to its activation) is an active-site residue.

This sequence belongs to the thymidylate synthase ThyX family. As to quaternary structure, homotetramer. FAD serves as cofactor.

The enzyme catalyses dUMP + (6R)-5,10-methylene-5,6,7,8-tetrahydrofolate + NADPH + H(+) = dTMP + (6S)-5,6,7,8-tetrahydrofolate + NADP(+). It participates in pyrimidine metabolism; dTTP biosynthesis. Catalyzes the reductive methylation of 2'-deoxyuridine-5'-monophosphate (dUMP) to 2'-deoxythymidine-5'-monophosphate (dTMP) while utilizing 5,10-methylenetetrahydrofolate (mTHF) as the methyl donor, and NADPH and FADH(2) as the reductant. This chain is Flavin-dependent thymidylate synthase, found in Treponema pallidum (strain Nichols).